The following is a 194-amino-acid chain: Phosphoheptose isomerase (194 aa).

In terms of domain architecture, SIS spans 37–194 (IANSFKQGGK…LIEFEMAKTA (158 aa)). 52–54 (NGG) lines the substrate pocket. Residues histidine 61 and glutamate 65 each contribute to the Zn(2+) site. Residues glutamate 65, 93 to 94 (ND), 119 to 121 (STS), serine 124, and glutamine 172 each bind substrate. Zn(2+)-binding residues include glutamine 172 and histidine 180.

It belongs to the SIS family. GmhA subfamily. Homotetramer. It depends on Zn(2+) as a cofactor.

Its subcellular location is the cytoplasm. The catalysed reaction is 2 D-sedoheptulose 7-phosphate = D-glycero-alpha-D-manno-heptose 7-phosphate + D-glycero-beta-D-manno-heptose 7-phosphate. It participates in carbohydrate biosynthesis; D-glycero-D-manno-heptose 7-phosphate biosynthesis; D-glycero-alpha-D-manno-heptose 7-phosphate and D-glycero-beta-D-manno-heptose 7-phosphate from sedoheptulose 7-phosphate: step 1/1. The protein operates within bacterial outer membrane biogenesis; LOS core biosynthesis. Functionally, catalyzes the isomerization of sedoheptulose 7-phosphate in D-glycero-D-manno-heptose 7-phosphate. The sequence is that of Phosphoheptose isomerase from Haemophilus ducreyi (strain 35000HP / ATCC 700724).